The sequence spans 517 residues: Probable cytosol aminopeptidase (517 aa).

Mn(2+) is bound by residues K279 and D284. K291 is an active-site residue. The Mn(2+) site is built by D302, D361, and E363. The active site involves R365.

This sequence belongs to the peptidase M17 family. It depends on Mn(2+) as a cofactor.

Its subcellular location is the cytoplasm. It carries out the reaction Release of an N-terminal amino acid, Xaa-|-Yaa-, in which Xaa is preferably Leu, but may be other amino acids including Pro although not Arg or Lys, and Yaa may be Pro. Amino acid amides and methyl esters are also readily hydrolyzed, but rates on arylamides are exceedingly low.. The catalysed reaction is Release of an N-terminal amino acid, preferentially leucine, but not glutamic or aspartic acids.. Presumably involved in the processing and regular turnover of intracellular proteins. Catalyzes the removal of unsubstituted N-terminal amino acids from various peptides. This chain is Probable cytosol aminopeptidase, found in Streptomyces coelicolor (strain ATCC BAA-471 / A3(2) / M145).